We begin with the raw amino-acid sequence, 426 residues long: Serine--tRNA ligase (426 aa).

Position 231–233 (231–233 (TAE)) interacts with L-serine. ATP is bound by residues 262-264 (RRE) and Val278. L-serine is bound at residue Glu285. 349–352 (EVSS) is an ATP binding site. Ser384 contacts L-serine.

This sequence belongs to the class-II aminoacyl-tRNA synthetase family. Type-1 seryl-tRNA synthetase subfamily. Homodimer. The tRNA molecule binds across the dimer.

It is found in the cytoplasm. The catalysed reaction is tRNA(Ser) + L-serine + ATP = L-seryl-tRNA(Ser) + AMP + diphosphate + H(+). It carries out the reaction tRNA(Sec) + L-serine + ATP = L-seryl-tRNA(Sec) + AMP + diphosphate + H(+). The protein operates within aminoacyl-tRNA biosynthesis; selenocysteinyl-tRNA(Sec) biosynthesis; L-seryl-tRNA(Sec) from L-serine and tRNA(Sec): step 1/1. In terms of biological role, catalyzes the attachment of serine to tRNA(Ser). Is also able to aminoacylate tRNA(Sec) with serine, to form the misacylated tRNA L-seryl-tRNA(Sec), which will be further converted into selenocysteinyl-tRNA(Sec). The sequence is that of Serine--tRNA ligase from Chlamydia felis (strain Fe/C-56) (Chlamydophila felis).